The chain runs to 424 residues: Histidine--tRNA ligase (424 aa).

This sequence belongs to the class-II aminoacyl-tRNA synthetase family. Homodimer.

The protein localises to the cytoplasm. The catalysed reaction is tRNA(His) + L-histidine + ATP = L-histidyl-tRNA(His) + AMP + diphosphate + H(+). The polypeptide is Histidine--tRNA ligase (Edwardsiella ictaluri (strain 93-146)).